A 473-amino-acid chain; its full sequence is MAAYVSPCLTPPDSRVLTVLRKSVLPDHHLGTRVGCLRMSEGTTKRYRVVASHKYESSSIRNSLNSHSTSHFQSQDSFLNLHPEISMLNPRKETSSVPITEDLDELSTPNTYNEARIKVIGVGGGGSNAVNRMIESEMIGVEFWIVNTDIQAMRISPVFPDNRLQIGKELTRGLGAGGNPEIGMNAATESKEAIQEALYGSDMVFVTAGMGGGTGTGGAPIIAGVAKAMGILTVGIVTTPFSFEGRRRALQAQEGIAALRDNVDTLIVIPNDKLLAAVSQSTPVTEAFNLADDILRQGVRGISDIITIPGLVNVDFADVRAIMANAGSSLMGIGTATGKTRARDAALNAIQSPLLDIGIERATGIVWNITGGSDLTLFEVNAAAEVIYDLVDPTANLIFGAVVDPSYSGQISITLIATGFKRQEEGEGRPLQATQADASMGATRRPSSSFTEGSSIEIPEFLKKKGRSRYPRL.

Residues 124–128 (GGGSN), 213–215 (GTG), Glu-244, and Arg-248 contribute to the GTP site. Phosphothreonine; by PGK1 is present on Thr-282. Asp-292 is a GTP binding site. Positions 424–455 (EEGEGRPLQATQADASMGATRRPSSSFTEGSS) are disordered. Residues 445–454 (RPSSSFTEGS) are compositionally biased toward polar residues.

This sequence belongs to the FtsZ family. In terms of assembly, aggregates to form a contractile ring-like structure; contraction of the ring was accompanied by an increase in the filament turnover rate. Self-interacts and binds to FTSZ1 in heteropolymers to form two morphologically distinct types of filaments, termed type-I (smooth filaments) and -II (rough filaments), in a GTP-dependent manner. Part of a complex made of ARC3, ARC6, FTSZ1 and FTSZ2. Interacts (via C-terminus) with ARC6. Interacts with CDP1/PARC6. Binds to PGK1. Post-translationally, phosphorylation at Thr-282 is required for the formation of contractile ring at the chloroplast midpoint.

It is found in the plastid. It localises to the chloroplast stroma. Its subcellular location is the chloroplast thylakoid membrane. Its function is as follows. Exhibits GTPase activity. Component of the plastid division machinery that forms a contractile ring at the division site. Contributes to plastid division in the vegetative shoot apex, at the shoot apical meristem (SAM) where the proplastid-to-chloroplast transition takes place. The sequence is that of Cell division protein FtsZ homolog 2-2, chloroplastic from Arabidopsis thaliana (Mouse-ear cress).